We begin with the raw amino-acid sequence, 519 residues long: Probable cytosol aminopeptidase (519 aa).

Mn(2+)-binding residues include lysine 251 and aspartate 256. The active site involves lysine 263. Mn(2+) is bound by residues aspartate 274, aspartate 333, and glutamate 335. Arginine 337 is a catalytic residue. The span at 487 to 502 (VAPAAPAAPAAPAARP) shows a compositional bias: low complexity. The segment at 487–519 (VAPAAPAAPAAPAARPAAKRTGRSQGGLKRTAP) is disordered.

It belongs to the peptidase M17 family. Requires Mn(2+) as cofactor.

The protein resides in the cytoplasm. The enzyme catalyses Release of an N-terminal amino acid, Xaa-|-Yaa-, in which Xaa is preferably Leu, but may be other amino acids including Pro although not Arg or Lys, and Yaa may be Pro. Amino acid amides and methyl esters are also readily hydrolyzed, but rates on arylamides are exceedingly low.. It carries out the reaction Release of an N-terminal amino acid, preferentially leucine, but not glutamic or aspartic acids.. Its function is as follows. Presumably involved in the processing and regular turnover of intracellular proteins. Catalyzes the removal of unsubstituted N-terminal amino acids from various peptides. The polypeptide is Probable cytosol aminopeptidase (Verminephrobacter eiseniae (strain EF01-2)).